The chain runs to 571 residues: Chitin-inducible gibberellin-responsive protein 1 (571 aa).

The segment covering 61–77 (TNTPDNQSSTETISAQP) has biased composition (polar residues). Disordered regions lie at residues 61 to 80 (TNTP…PISP) and 151 to 180 (QRSR…YPTA). The region spanning 192–571 (ELREDPQIIV…RKLISASAWH (380 aa)) is the GRAS domain. The segment at 199 to 259 (IIVKQLLTRC…VARHGNSGTN (61 aa)) is leucine repeat I (LRI). The tract at residues 278–343 (MRILYNICPY…GGPPRVRITG (66 aa)) is VHIID. Residues 309-313 (IHIID) carry the VHIID motif. The interval 359–391 (IVGKMLKSMSEEFKIPLEFTPLSVYATQVTKEM) is leucine repeat II (LRII). Residues 400 to 494 (LSVNFTLQLH…QHCLAKDIVN (95 aa)) are PFYRE. The segment at 497–571 (ACEGKDRVER…RKLISASAWH (75 aa)) is SAW.

This sequence belongs to the GRAS family.

Its subcellular location is the nucleus. In terms of biological role, may play a regulatory role in the early step of oligosaccharide elicitor response, downstream of the membrane-associated high-affinity chitin-binding protein. The polypeptide is Chitin-inducible gibberellin-responsive protein 1 (CIGR1) (Oryza sativa subsp. japonica (Rice)).